The sequence spans 476 residues: Argininosuccinate lyase (476 aa).

A compositionally biased stretch (low complexity) spans 1–17; that stretch reads MTDTGSSDTNTDTTGTS. The interval 1–22 is disordered; the sequence is MTDTGSSDTNTDTTGTSKANTM.

It belongs to the lyase 1 family. Argininosuccinate lyase subfamily.

Its subcellular location is the cytoplasm. It carries out the reaction 2-(N(omega)-L-arginino)succinate = fumarate + L-arginine. It participates in amino-acid biosynthesis; L-arginine biosynthesis; L-arginine from L-ornithine and carbamoyl phosphate: step 3/3. The polypeptide is Argininosuccinate lyase (Jannaschia sp. (strain CCS1)).